The following is a 459-amino-acid chain: Bifunctional protein GlmU (459 aa).

The tract at residues 1–229 (MSNFAIILAA…FDESLGVNDR (229 aa)) is pyrophosphorylase. UDP-N-acetyl-alpha-D-glucosamine is bound by residues 8-11 (LAAG), Lys22, Gln72, and 77-78 (GT). Asp102 is a binding site for Mg(2+). Residues Gly139, Glu154, Asn169, and Asn227 each contribute to the UDP-N-acetyl-alpha-D-glucosamine site. A Mg(2+)-binding site is contributed by Asn227. The tract at residues 230 to 250 (VALATAESVMRRRINHKHMVN) is linker. Residues 251–459 (GVSFVNPEAT…TRLPHHPKNQ (209 aa)) form an N-acetyltransferase region. Positions 332 and 350 each coordinate UDP-N-acetyl-alpha-D-glucosamine. His362 functions as the Proton acceptor in the catalytic mechanism. 2 residues coordinate UDP-N-acetyl-alpha-D-glucosamine: Tyr365 and Asn376. Residues Ala379, 385-386 (NY), Ser404, Ala422, and Arg439 contribute to the acetyl-CoA site.

In the N-terminal section; belongs to the N-acetylglucosamine-1-phosphate uridyltransferase family. The protein in the C-terminal section; belongs to the transferase hexapeptide repeat family. As to quaternary structure, homotrimer. Mg(2+) serves as cofactor.

It is found in the cytoplasm. The catalysed reaction is alpha-D-glucosamine 1-phosphate + acetyl-CoA = N-acetyl-alpha-D-glucosamine 1-phosphate + CoA + H(+). The enzyme catalyses N-acetyl-alpha-D-glucosamine 1-phosphate + UTP + H(+) = UDP-N-acetyl-alpha-D-glucosamine + diphosphate. Its pathway is nucleotide-sugar biosynthesis; UDP-N-acetyl-alpha-D-glucosamine biosynthesis; N-acetyl-alpha-D-glucosamine 1-phosphate from alpha-D-glucosamine 6-phosphate (route II): step 2/2. The protein operates within nucleotide-sugar biosynthesis; UDP-N-acetyl-alpha-D-glucosamine biosynthesis; UDP-N-acetyl-alpha-D-glucosamine from N-acetyl-alpha-D-glucosamine 1-phosphate: step 1/1. It functions in the pathway bacterial outer membrane biogenesis; LPS lipid A biosynthesis. Functionally, catalyzes the last two sequential reactions in the de novo biosynthetic pathway for UDP-N-acetylglucosamine (UDP-GlcNAc). The C-terminal domain catalyzes the transfer of acetyl group from acetyl coenzyme A to glucosamine-1-phosphate (GlcN-1-P) to produce N-acetylglucosamine-1-phosphate (GlcNAc-1-P), which is converted into UDP-GlcNAc by the transfer of uridine 5-monophosphate (from uridine 5-triphosphate), a reaction catalyzed by the N-terminal domain. The protein is Bifunctional protein GlmU of Streptococcus pneumoniae (strain Hungary19A-6).